The following is a 137-amino-acid chain: Peptide methionine sulfoxide reductase MsrB (137 aa).

Residues 1 to 33 are disordered; sequence MSNNQDRPGQITDESLRERLSPEAYAVTRRAGT. The 123-residue stretch at 13–135 folds into the MsrB domain; sequence DESLRERLSP…NSLSLDFKAA (123 aa). Zn(2+) is bound by residues C52, C55, C101, and C104. C124 acts as the Nucleophile in catalysis.

This sequence belongs to the MsrB Met sulfoxide reductase family. It depends on Zn(2+) as a cofactor.

The enzyme catalyses L-methionyl-[protein] + [thioredoxin]-disulfide + H2O = L-methionyl-(R)-S-oxide-[protein] + [thioredoxin]-dithiol. In Thioalkalivibrio sulfidiphilus (strain HL-EbGR7), this protein is Peptide methionine sulfoxide reductase MsrB.